The primary structure comprises 1563 residues: NACHT domain- and WD repeat-containing protein 1 (1563 aa).

A WD 1 repeat occupies Thr-274–Cys-314. Residues Thr-336–Val-666 form the NACHT domain. Gly-342 to Thr-349 provides a ligand contact to ATP. 12 WD repeats span residues Gly-866 to Val-905, Gly-908 to Thr-947, Gln-954 to Cys-994, Asp-998 to Lys-1037, Lys-1044 to Lys-1082, Glu-1126 to Asn-1165, Glu-1168 to Ser-1207, Leu-1212 to Cys-1251, Asp-1253 to Cys-1292, Gln-1346 to Glu-1385, Ala-1386 to Glu-1425, and Ser-1431 to Val-1470. The segment at Ala-1534–Leu-1563 is disordered.

As to quaternary structure, may interact with HSP90AA1, HSP90AB1 and BAG2.

The protein resides in the cytoplasm. It is found in the cytosol. Functionally, may play a role in the control of androgen receptor (AR) protein steady-state levels. The sequence is that of NACHT domain- and WD repeat-containing protein 1 (Nwd1) from Mus musculus (Mouse).